A 509-amino-acid polypeptide reads, in one-letter code: Butyrophilin-like protein 1 (509 aa).

The N-terminal stretch at 1–27 is a signal peptide; that stretch reads MMKGSPSVPPAGCLLPLLLLLFTGVSG. 2 consecutive Ig-like V-type domains span residues 28–139 and 151–237; these read EVSW…QEVS and PLVH…KAIL. Residues 28–250 are Extracellular-facing; it reads EVSWFSVKGP…PFFPKTCPWK (223 aa). 2 disulfides stabilise this stretch: Cys53–Cys127 and Cys167–Cys221. Residues 251–271 form a helical membrane-spanning segment; sequence VALVCSVLILLVLLGGISLGI. At 272–509 the chain is on the cytoplasmic side; that stretch reads WKEHQVKRRE…SMGLSATAQP (238 aa). One can recognise a B30.2/SPRY domain in the interval 316-509; that stretch reads RKALYKEDWK…SMGLSATAQP (194 aa). The tract at residues 349–372 is disordered; sequence MPDQDKTDSRTEENRGEETVSSSQ. Over residues 351 to 366 the composition is skewed to basic and acidic residues; sequence DQDKTDSRTEENRGEE.

This sequence belongs to the immunoglobulin superfamily. BTN/MOG family.

It localises to the membrane. The chain is Butyrophilin-like protein 1 (Btnl1) from Mus musculus (Mouse).